A 123-amino-acid chain; its full sequence is Large ribosomal subunit protein bL19 (123 aa).

The protein belongs to the bacterial ribosomal protein bL19 family.

Functionally, this protein is located at the 30S-50S ribosomal subunit interface and may play a role in the structure and function of the aminoacyl-tRNA binding site. This Treponema pallidum (strain Nichols) protein is Large ribosomal subunit protein bL19 (rplS).